A 357-amino-acid chain; its full sequence is N-acetyl-gamma-glutamyl-phosphate reductase (357 aa).

The active site involves cysteine 160.

It belongs to the NAGSA dehydrogenase family. Type 1 subfamily.

The protein resides in the cytoplasm. The enzyme catalyses N-acetyl-L-glutamate 5-semialdehyde + phosphate + NADP(+) = N-acetyl-L-glutamyl 5-phosphate + NADPH + H(+). The protein operates within amino-acid biosynthesis; L-arginine biosynthesis; N(2)-acetyl-L-ornithine from L-glutamate: step 3/4. Catalyzes the NADPH-dependent reduction of N-acetyl-5-glutamyl phosphate to yield N-acetyl-L-glutamate 5-semialdehyde. In Synechococcus sp. (strain CC9605), this protein is N-acetyl-gamma-glutamyl-phosphate reductase.